The sequence spans 165 residues: Large ribosomal subunit protein uL11 (165 aa).

Phosphoserine is present on serine 38. Residue lysine 40 forms a Glycyl lysine isopeptide (Lys-Gly) (interchain with G-Cter in SUMO2) linkage. Lysine 48 is covalently cross-linked (Glycyl lysine isopeptide (Lys-Gly) (interchain with G-Cter in ubiquitin)). Residue lysine 54 is modified to N6-acetyllysine. Residue lysine 83 forms a Glycyl lysine isopeptide (Lys-Gly) (interchain with G-Cter in ubiquitin) linkage. Serine 165 carries the phosphoserine modification.

Belongs to the universal ribosomal protein uL11 family. As to quaternary structure, component of the large ribosomal subunit. Mature ribosomes consist of a small (40S) and a large (60S) subunit. The 40S subunit contains about 33 different proteins and 1 molecule of RNA (18S). The 60S subunit contains about 49 different proteins and 3 molecules of RNA (28S, 5.8S and 5S). Ubiquitinated at Lys-48 and Lys-83 by RNF14 and RNF25 in response to ribosome collisions (ribosome stalling).

The protein localises to the cytoplasm. Component of the large ribosomal subunit. The ribosome is a large ribonucleoprotein complex responsible for the synthesis of proteins in the cell. Binds directly to 26S ribosomal RNA. This is Large ribosomal subunit protein uL11 (Rpl12) from Rattus norvegicus (Rat).